The primary structure comprises 460 residues: Cysteine--tRNA ligase (460 aa).

Cys-29 serves as a coordination point for Zn(2+). The 'HIGH' region signature appears at 31–41 (MTVYDYMHIGH). Zn(2+)-binding residues include Cys-210, His-235, and Glu-239. The 'KMSKS' region motif lies at 267–271 (KMSKS). Lys-270 is a binding site for ATP.

The protein belongs to the class-I aminoacyl-tRNA synthetase family. As to quaternary structure, monomer. Zn(2+) serves as cofactor.

It localises to the cytoplasm. It carries out the reaction tRNA(Cys) + L-cysteine + ATP = L-cysteinyl-tRNA(Cys) + AMP + diphosphate. The protein is Cysteine--tRNA ligase of Coxiella burnetii (strain RSA 493 / Nine Mile phase I).